Reading from the N-terminus, the 58-residue chain is Small ribosomal subunit protein bS21 (58 aa).

The tract at residues 39–58 is disordered; it reads DKPSVKKRAKSKAAAKYRSR. Positions 43-58 are enriched in basic residues; that stretch reads VKKRAKSKAAAKYRSR.

Belongs to the bacterial ribosomal protein bS21 family.

The chain is Small ribosomal subunit protein bS21 from Chlamydia abortus (strain DSM 27085 / S26/3) (Chlamydophila abortus).